We begin with the raw amino-acid sequence, 232 residues long: 5'-methylthioadenosine/S-adenosylhomocysteine nucleosidase (232 aa).

Glu12 functions as the Proton acceptor in the catalytic mechanism. Substrate-binding positions include Gly78, Ile152, and 173–174 (ME). Asp197 (proton donor) is an active-site residue.

Belongs to the PNP/UDP phosphorylase family. MtnN subfamily. In terms of assembly, homodimer.

The catalysed reaction is S-adenosyl-L-homocysteine + H2O = S-(5-deoxy-D-ribos-5-yl)-L-homocysteine + adenine. The enzyme catalyses S-methyl-5'-thioadenosine + H2O = 5-(methylsulfanyl)-D-ribose + adenine. It catalyses the reaction 5'-deoxyadenosine + H2O = 5-deoxy-D-ribose + adenine. Its pathway is amino-acid biosynthesis; L-methionine biosynthesis via salvage pathway; S-methyl-5-thio-alpha-D-ribose 1-phosphate from S-methyl-5'-thioadenosine (hydrolase route): step 1/2. Catalyzes the irreversible cleavage of the glycosidic bond in both 5'-methylthioadenosine (MTA) and S-adenosylhomocysteine (SAH/AdoHcy) to adenine and the corresponding thioribose, 5'-methylthioribose and S-ribosylhomocysteine, respectively. Also cleaves 5'-deoxyadenosine, a toxic by-product of radical S-adenosylmethionine (SAM) enzymes, into 5-deoxyribose and adenine. Thus, is required for in vivo function of the radical SAM enzymes biotin synthase and lipoic acid synthase, that are inhibited by 5'-deoxyadenosine accumulation. The chain is 5'-methylthioadenosine/S-adenosylhomocysteine nucleosidase from Klebsiella pneumoniae (strain 342).